Consider the following 395-residue polypeptide: E3 ubiquitin-protein ligase NHLRC1 (395 aa).

The RING-type zinc finger occupies 26–72 (CKVCFEKFGHRQQRRPRNLSCGHVVCLACVAALAHPRTLALECPFCR). NHL repeat units follow at residues 113 to 157 (ALTC…FDSG), 161 to 204 (AHQF…FDFF), 205 to 245 (GQIK…LDVD), 248 to 300 (EGVL…FSSS), 301 to 349 (MQLV…LGKP), and 350 to 393 (EEFP…YKVD).

As to quaternary structure, interacts with AGL. Interacts (via the NHL repeats) with EPM2A/laforin. Forms a complex with EPM2A/laforin and HSP70. Interacts with PRDM8. In terms of tissue distribution, expressed in brain, cerebellum, spinal cord, medulla, heart, liver, skeletal muscle and pancreas.

The protein localises to the endoplasmic reticulum. It localises to the nucleus. It carries out the reaction S-ubiquitinyl-[E2 ubiquitin-conjugating enzyme]-L-cysteine + [acceptor protein]-L-lysine = [E2 ubiquitin-conjugating enzyme]-L-cysteine + N(6)-ubiquitinyl-[acceptor protein]-L-lysine.. It functions in the pathway protein modification; protein ubiquitination. E3 ubiquitin-protein ligase. Together with the phosphatase EPM2A/laforin, appears to be involved in the clearance of toxic polyglucosan and protein aggregates via multiple pathways. In complex with EPM2A/laforin and HSP70, suppresses the cellular toxicity of misfolded proteins by promoting their degradation through the ubiquitin-proteasome system (UPS). Ubiquitinates the glycogen-targeting protein phosphatase subunits PPP1R3C/PTG and PPP1R3D in a laforin-dependent manner and targets them for proteasome-dependent degradation, thus decreasing glycogen accumulation. Polyubiquitinates EPM2A/laforin and ubiquitinates AGL and targets them for proteasome-dependent degradation. Also promotes proteasome-independent protein degradation through the macroautophagy pathway. This is E3 ubiquitin-protein ligase NHLRC1 (NHLRC1) from Homo sapiens (Human).